We begin with the raw amino-acid sequence, 458 residues long: ATP synthase subunit beta (458 aa).

148–155 (GGAGVGKT) contacts ATP.

This sequence belongs to the ATPase alpha/beta chains family. F-type ATPases have 2 components, CF(1) - the catalytic core - and CF(0) - the membrane proton channel. CF(1) has five subunits: alpha(3), beta(3), gamma(1), delta(1), epsilon(1). CF(0) has three main subunits: a(1), b(2) and c(9-12). The alpha and beta chains form an alternating ring which encloses part of the gamma chain. CF(1) is attached to CF(0) by a central stalk formed by the gamma and epsilon chains, while a peripheral stalk is formed by the delta and b chains.

The protein localises to the cell inner membrane. The catalysed reaction is ATP + H2O + 4 H(+)(in) = ADP + phosphate + 5 H(+)(out). Its function is as follows. Produces ATP from ADP in the presence of a proton gradient across the membrane. The catalytic sites are hosted primarily by the beta subunits. The polypeptide is ATP synthase subunit beta (Shewanella piezotolerans (strain WP3 / JCM 13877)).